Here is a 106-residue protein sequence, read N- to C-terminus: ATP-dependent Clp protease adapter protein ClpS (106 aa).

Belongs to the ClpS family. In terms of assembly, binds to the N-terminal domain of the chaperone ClpA.

Involved in the modulation of the specificity of the ClpAP-mediated ATP-dependent protein degradation. This is ATP-dependent Clp protease adapter protein ClpS from Escherichia fergusonii (strain ATCC 35469 / DSM 13698 / CCUG 18766 / IAM 14443 / JCM 21226 / LMG 7866 / NBRC 102419 / NCTC 12128 / CDC 0568-73).